The primary structure comprises 356 residues: uncharacterized protein (356 aa).

The N-terminal stretch at 1 to 21 is a signal peptide; that stretch reads MKLITAPCRALLALPFCYAFS.

This is an uncharacterized protein from Escherichia coli (strain K12).